Reading from the N-terminus, the 371-residue chain is Diterpene cyclase DtcycA (371 aa).

Positions 234, 238, and 242 each coordinate Mg(2+).

This sequence belongs to the terpene synthase family. Homodimer. The cofactor is Mg(2+).

It catalyses the reaction (2E,6E,10E)-geranylgeranyl diphosphate = cembrene C + diphosphate. The enzyme catalyses (2E,6E,10E)-geranylgeranyl diphosphate + H2O = (R)-nephthenol + diphosphate. Diterpene cyclases that can form multiple diterpene products. In Streptomyces sp, this protein is Diterpene cyclase DtcycA.